Consider the following 443-residue polypeptide: Serine/threonine-protein phosphatase 2A 55 kDa regulatory subunit B beta isoform (443 aa).

WD repeat units follow at residues 22-61, 87-128, 171-209, and 220-260; these read TEAD…KNQV, EIEE…KRPE, AHTY…QSFN, and ELTE…LCDR. Ser275 carries the phosphoserine modification. 3 WD repeats span residues 279-317, 334-375, and 410-442; these read EIIS…RPVE, ENDC…DVTL, and DFSK…QDKV. Residue Tyr295 is modified to Phosphotyrosine. Thr298 carries the post-translational modification Phosphothreonine.

It belongs to the phosphatase 2A regulatory subunit B family. In terms of assembly, PP2A consists of a common heterodimeric core enzyme, composed of a 36 kDa catalytic subunit (subunit C) and a 65 kDa constant regulatory subunit (PR65 or subunit A), that associates with a variety of regulatory subunits. Proteins that associate with the core dimer include three families of regulatory subunits B (the R2/B/PR55/B55, R3/B''/PR72/PR130/PR59 and R5/B'/B56 families), the 48 kDa variable regulatory subunit, viral proteins, and cell signaling molecules. Interacts with IER5 (via N- and C-terminal regions). Interacts with TOMM22. Expressed in the brain. Isoform 1 and isoform 2 are expressed in the forbrain. Isoform 1 is more strongly expressed than isoform 2 in the olfactory bulb. Isoform 1 and isoform 2 are weakly expressed in the cerebellum. Isoform 1 is expressed in the testis. Isoform 2 expression is undetectable at birth rising to adult level at day 14.

The protein resides in the cytoplasm. Its subcellular location is the cytoskeleton. The protein localises to the membrane. It is found in the mitochondrion. It localises to the mitochondrion outer membrane. The B regulatory subunit might modulate substrate selectivity and catalytic activity, and might also direct the localization of the catalytic enzyme to a particular subcellular compartment. Within the PP2A holoenzyme complex, isoform 2 is required to promote proapoptotic activity. Isoform 2 regulates neuronal survival through the mitochondrial fission and fusion balance. The polypeptide is Serine/threonine-protein phosphatase 2A 55 kDa regulatory subunit B beta isoform (Ppp2r2b) (Rattus norvegicus (Rat)).